The primary structure comprises 76 residues: Tautomerase PptA (76 aa).

Pro2 (proton acceptor; via imino nitrogen) is an active-site residue.

Belongs to the 4-oxalocrotonate tautomerase family. PptA subfamily. In terms of assembly, homodimer.

Its subcellular location is the cytoplasm. The sequence is that of Tautomerase PptA from Pectobacterium atrosepticum (strain SCRI 1043 / ATCC BAA-672) (Erwinia carotovora subsp. atroseptica).